The sequence spans 378 residues: Cyclic GMP-AMP synthase-like receptor 1 (378 aa).

Mg(2+)-binding residues include Glu-71, Asp-73, and Asp-187. An ATP-binding site is contributed by 71-73; the sequence is EFD. Residues Asp-187 and 233-240 contribute to the GTP site; that span reads TSSFYEAE. Residues 237-240, Lys-258, and 271-275 contribute to the ATP site; these read YEAE and SYHIK.

It belongs to the mab-21 family. The cofactor is Mg(2+). Requires Mn(2+) as cofactor.

The enzyme catalyses GTP + ATP = 3',2'-cGAMP + 2 diphosphate. It carries out the reaction GTP + ATP = pppA(2'-5')pG + diphosphate. It catalyses the reaction pppA(2'-5')pG = 3',2'-cGAMP + diphosphate. With respect to regulation, the enzyme activity is specifically activated by double-stranded RNA (dsRNA). Recognizes long dsRNA (&gt;30 bp) with no preference for 5' RNA phosphorylation. In terms of biological role, nucleotidyltransferase that catalyzes the formation of cyclic GMP-AMP (3',2'-cGAMP) from ATP and GTP and plays a key role in antiviral innate immunity. Synthesizes 3',2'-cGAMP in a two-step reaction through production of the linear intermediate pppA(2'-5')pG. Acts as a key sensor of double-stranded RNA (dsRNA), the presence of dsRNA in the cytoplasm being a danger signal that triggers the immune responses. Directly binds dsRNA, activating the nucleotidyltransferase activity, leading to synthesis of 3',2'-cGAMP, a second messenger that binds to and activates Sting, thereby triggering the antiviral immune response via activation of the NF-kappa-B transcription factor Rel (Relish). 3',2'-cGAMP is protected from poxin cleavage. This is Cyclic GMP-AMP synthase-like receptor 1 from Drosophila melanogaster (Fruit fly).